We begin with the raw amino-acid sequence, 444 residues long: Methylenetetrahydrofolate--tRNA-(uracil-5-)-methyltransferase TrmFO (444 aa).

Glycine 11–glycine 16 contributes to the FAD binding site.

This sequence belongs to the MnmG family. TrmFO subfamily. The cofactor is FAD.

The protein resides in the cytoplasm. The enzyme catalyses uridine(54) in tRNA + (6R)-5,10-methylene-5,6,7,8-tetrahydrofolate + NADH + H(+) = 5-methyluridine(54) in tRNA + (6S)-5,6,7,8-tetrahydrofolate + NAD(+). It catalyses the reaction uridine(54) in tRNA + (6R)-5,10-methylene-5,6,7,8-tetrahydrofolate + NADPH + H(+) = 5-methyluridine(54) in tRNA + (6S)-5,6,7,8-tetrahydrofolate + NADP(+). In terms of biological role, catalyzes the folate-dependent formation of 5-methyl-uridine at position 54 (M-5-U54) in all tRNAs. In Desulfotalea psychrophila (strain LSv54 / DSM 12343), this protein is Methylenetetrahydrofolate--tRNA-(uracil-5-)-methyltransferase TrmFO.